Here is a 1241-residue protein sequence, read N- to C-terminus: DNA-directed RNA polymerase subunit beta (1241 aa).

A disordered region spans residues 1195–1219 (PQDVQENVSGENVDAGYENEDVDID).

The protein belongs to the RNA polymerase beta chain family. As to quaternary structure, the RNAP catalytic core consists of 2 alpha, 1 beta, 1 beta' and 1 omega subunit. When a sigma factor is associated with the core the holoenzyme is formed, which can initiate transcription.

It carries out the reaction RNA(n) + a ribonucleoside 5'-triphosphate = RNA(n+1) + diphosphate. Functionally, DNA-dependent RNA polymerase catalyzes the transcription of DNA into RNA using the four ribonucleoside triphosphates as substrates. The protein is DNA-directed RNA polymerase subunit beta of Clostridium acetobutylicum (strain ATCC 824 / DSM 792 / JCM 1419 / IAM 19013 / LMG 5710 / NBRC 13948 / NRRL B-527 / VKM B-1787 / 2291 / W).